We begin with the raw amino-acid sequence, 67 residues long: Alpha-conotoxin-like Pu1.1 (67 aa).

A signal peptide spans 1-21 (MGMRMMFTVFLLVVLATTVVS). Positions 22 to 46 (FTSDRTSDGRNAAFNAFDLIALTAR) are excised as a propeptide. Gln47 is subject to Pyrrolidone carboxylic acid. Disulfide bonds link Cys49/Cys55 and Cys50/Cys63. The lacks the Ser-Xaa-Pro motif that is crucial for potent interaction with nAChR stretch occupies residues 51–53 (NVP). At Cys63 the chain carries Cysteine amide.

It belongs to the conotoxin A superfamily. Expressed by the venom duct.

It is found in the secreted. In terms of biological role, alpha-conotoxins act on postsynaptic membranes, they bind to the nicotinic acetylcholine receptors (nAChR) and thus inhibit them. Has possibly a distinct nAChR binding mode from other alpha-conotoxins, due to a different three residue motif (lacks the Ser-Xaa-Pro motif). The polypeptide is Alpha-conotoxin-like Pu1.1 (Conus pulicarius (Flea-bitten cone)).